Reading from the N-terminus, the 401-residue chain is Enoyl-[acyl-carrier-protein] reductase [NADH] 1 (401 aa).

NAD(+) is bound by residues 48–53 (GSSSGY), 74–75 (FE), 111–112 (DA), and 139–140 (LA). Substrate is bound at residue Y225. Y235 serves as the catalytic Proton donor. Residues K244 and 273-275 (VVT) contribute to the NAD(+) site.

Belongs to the TER reductase family. Monomer.

It catalyses the reaction a 2,3-saturated acyl-[ACP] + NAD(+) = a (2E)-enoyl-[ACP] + NADH + H(+). It carries out the reaction a 2,3-saturated acyl-CoA + NAD(+) = a (2E)-enoyl-CoA + NADH + H(+). The catalysed reaction is (2E)-butenoyl-[ACP] + NADH + H(+) = butanoyl-[ACP] + NAD(+). The enzyme catalyses butanoyl-CoA + NAD(+) = (2E)-butenoyl-CoA + NADH + H(+). It participates in lipid metabolism; fatty acid biosynthesis. Its activity is regulated as follows. Weakly inhibited by triclosan. Involved in the final reduction of the elongation cycle of fatty acid synthesis (FAS II). Catalyzes the NADH-dependent reduction of a carbon-carbon double bond in an enoyl moiety that is covalently linked to an acyl carrier protein (ACP). It can use both crotonyl-CoA and crotonyl-ACP. The chain is Enoyl-[acyl-carrier-protein] reductase [NADH] 1 from Vibrio cholerae serotype O1 (strain ATCC 39315 / El Tor Inaba N16961).